The chain runs to 239 residues: Tetraspanin-9 (239 aa).

Residues 1 to 13 (MARGCLCCLKYMM) lie on the Cytoplasmic side of the membrane. Residues 14–34 (FLFNLIFWLCGCGLLGVGIWL) traverse the membrane as a helical segment. At 35 to 55 (SVSQGNFATFSPSFPSLSAAN) the chain is on the extracellular side. A helical membrane pass occupies residues 56–76 (LVIAIGTIVMVTGFLGCLGAI). Topologically, residues 77 to 85 (KENKCLLLS) are cytoplasmic. The chain crosses the membrane as a helical span at residues 86 to 106 (FFIVLLVILLAELILLILFFV). Topologically, residues 107-203 (YMDKVNENAK…VKMWFDDNKH (97 aa)) are extracellular. A glycan (N-linked (GlcNAc...) asparagine) is linked at N180. Residues 204 to 224 (VLGTVGMCILIMQILGMAFSM) form a helical membrane-spanning segment. Over 225-239 (TLFQHIHRTGKKYDA) the chain is Cytoplasmic.

Belongs to the tetraspanin (TM4SF) family. Found in a complex with GP6. Post-translationally, glycosylated. In terms of tissue distribution, expressed in megakaryocytes and platelets (at protein level).

The protein localises to the membrane. This is Tetraspanin-9 (TSPAN9) from Homo sapiens (Human).